A 1357-amino-acid chain; its full sequence is DNA-directed RNA polymerase subunit beta (1357 aa).

It belongs to the RNA polymerase beta chain family. As to quaternary structure, the RNAP catalytic core consists of 2 alpha, 1 beta, 1 beta' and 1 omega subunit. When a sigma factor is associated with the core the holoenzyme is formed, which can initiate transcription.

It catalyses the reaction RNA(n) + a ribonucleoside 5'-triphosphate = RNA(n+1) + diphosphate. Its function is as follows. DNA-dependent RNA polymerase catalyzes the transcription of DNA into RNA using the four ribonucleoside triphosphates as substrates. This is DNA-directed RNA polymerase subunit beta from Pseudomonas fluorescens (strain Pf0-1).